The sequence spans 874 residues: Translation initiation factor IF-2 (874 aa).

The disordered stretch occupies residues 1 to 289 (MKIKNAQLTK…KHYDEHSVQR (289 aa)). Residues 31–48 (SSSEKPTTKVPEKVAKEK) show a composition bias toward basic and acidic residues. Positions 81-104 (RSSFASEDSTIPSPVSVDTESTAF) are enriched in polar residues. Positions 105-118 (SPPVVEEVVSPLES) are enriched in low complexity. Composition is skewed to basic and acidic residues over residues 144–158 (PPKKEAELVVKKEPP) and 186–198 (PKKEDKPAPKERT). Residues 199 to 211 (GTVQTKPQQSSEV) are compositionally biased toward polar residues. The segment covering 228–260 (YRRDTSKRPGSDFRDRSKKDDSPKAFTGRDRYG) has biased composition (basic and acidic residues). Residues 271 to 280 (RKKRVQKTKK) show a composition bias toward basic residues. Positions 380–549 (IRPPIVAFMG…ALQAEVLELK (170 aa)) constitute a tr-type G domain. The interval 389 to 396 (GHVDHGKT) is G1. A GTP-binding site is contributed by 389–396 (GHVDHGKT). Residues 414 to 418 (AITQH) form a G2 region. Residues 435 to 438 (DTPG) form a G3 region. Residues 435-439 (DTPGH) and 489-492 (NKCD) contribute to the GTP site. A G4 region spans residues 489–492 (NKCD). A G5 region spans residues 525 to 527 (SAK).

Belongs to the TRAFAC class translation factor GTPase superfamily. Classic translation factor GTPase family. IF-2 subfamily.

It localises to the cytoplasm. One of the essential components for the initiation of protein synthesis. Protects formylmethionyl-tRNA from spontaneous hydrolysis and promotes its binding to the 30S ribosomal subunits. Also involved in the hydrolysis of GTP during the formation of the 70S ribosomal complex. This chain is Translation initiation factor IF-2, found in Chlamydia abortus (strain DSM 27085 / S26/3) (Chlamydophila abortus).